A 284-amino-acid polypeptide reads, in one-letter code: Avenin-like b4 (284 aa).

Positions 1–18 (MKVFILALLALTATTAIA) are cleaved as a signal peptide.

It belongs to the prolamin family. Contains disulfide bonds.

In terms of biological role, seed storage protein. Might be integrated via inter-chain disulfide bonds within the glutenin polymer. The sequence is that of Avenin-like b4 from Triticum aestivum (Wheat).